Here is a 596-residue protein sequence, read N- to C-terminus: Sensor protein ChvG (596 aa).

The tract at residues 1 to 22 (MLKKTPETVSDSDDAEERGSER) is disordered. Over 1–47 (MLKKTPETVSDSDDAEERGSERRHRIHPLTIIRRIFGNAVFSSLTRR) the chain is Cytoplasmic. The chain crosses the membrane as a helical span at residues 48–68 (ILFFNVAATVVLVGGILYLNQ). At 69–283 (FREGLIDARV…VHAERLAIMR (215 aa)) the chain is on the periplasmic side. A helical membrane pass occupies residues 284 to 304 (VFGIATLVNIVLSLLLSSTIA). One can recognise an HAMP domain in the interval 301-356 (STIATPLRRLSAAAIRVRRGARTREEIPDFSARQDEIGNLSIALREMTTALYDRID). Over 305 to 596 (TPLRRLSAAA…SLPAAETHER (292 aa)) the chain is Cytoplasmic. The region spanning 364-592 (DVSHELKNPL…RFTLSLPAAE (229 aa)) is the Histidine kinase domain. His-367 carries the phosphohistidine modification.

The protein resides in the cell inner membrane. It carries out the reaction ATP + protein L-histidine = ADP + protein N-phospho-L-histidine.. Member of a two-component regulatory system ChvG/ChvI. Activates ChvI by phosphorylation (Potential). This is Sensor protein ChvG (chvG) from Agrobacterium fabrum (strain C58 / ATCC 33970) (Agrobacterium tumefaciens (strain C58)).